A 2517-amino-acid polypeptide reads, in one-letter code: Serine/threonine-protein kinase ATR (2517 aa).

The stretch at 1178-1214 is one HEAT repeat; the sequence is EPMLEQIVNVLMAGCQHDDSQLQMASAKCLGELGAID. Residues 1509 to 2066 enclose the FAT domain; it reads LVSRASYNCG…LWMLLPHFKS (558 aa). The residue at position 1569 (Ser1569) is a Phosphoserine. At Tyr1570 the chain carries Phosphotyrosine. At Ser1573 the chain carries Phosphoserine. Residue Thr1575 is modified to Phosphothreonine. The region spanning 2184–2508 is the PI3K/PI4K catalytic domain; it reads FQESVLILRS…EATKVDNLAS (325 aa). Residues 2190–2196 are G-loop; the sequence is ILRSAAK. The segment at 2360-2368 is catalytic loop; it reads GLGDRHGEN. The interval 2380-2404 is activation loop; sequence HVDFNCLFNQGELLPYPEVVPFRLT. Positions 2485–2517 constitute an FATC domain; it reads IPLSTEGQVNFLINEATKVDNLASMYIGWGAFL.

The protein belongs to the PI3/PI4-kinase family. ATM subfamily. As to quaternary structure, interacts with mus304. Mn(2+) serves as cofactor.

Its subcellular location is the nucleus. The enzyme catalyses L-seryl-[protein] + ATP = O-phospho-L-seryl-[protein] + ADP + H(+). It carries out the reaction L-threonyl-[protein] + ATP = O-phospho-L-threonyl-[protein] + ADP + H(+). In terms of biological role, serine/threonine protein kinase which activates checkpoint signaling upon genotoxic stresses such as ionizing radiation (IR), ultraviolet light (UV), or DNA replication stalling, thereby acting as a DNA damage sensor. Recognizes the substrate consensus sequence [ST]-Q. Phosphorylates various proteins, which collectively inhibits DNA replication and mitosis and promotes DNA repair and recombination. Phosphorylates grp/CHK1. Phosphorylates 'Ser-137' of histone variant H2AX/H2AV at sites of DNA damage, thereby regulating DNA damage response mechanism. Essential for the DNA damage checkpoint in larval imaginal disks and neuroblasts and for the DNA replication checkpoint in the embryo. Also has an essential role during early nuclear divisions in embryos, where it is required to delay mitosis in response to incomplete DNA replication. Also plays an important role during meiosis, where it may monitor double-strand-break repair during meiotic crossing over, to regulate the progression of prophase I, and to enforce metaphase I delay observed at the end of oogenesis. Involved in telomere maintenance and prevention of telomere fusion; potentially functioning downstream of moi/modigliani. This chain is Serine/threonine-protein kinase ATR (mei-41), found in Drosophila melanogaster (Fruit fly).